Reading from the N-terminus, the 212-residue chain is Nucleoredoxin-like protein 1 (212 aa).

A Thioredoxin domain is found at 1–164 (MASLFSGRIL…AAEVLDRNFQ (164 aa)). A disordered region spans residues 191–212 (AARGGRDPGGGGGEEGGAGGLF). Residues 197–212 (DPGGGGGEEGGAGGLF) show a composition bias toward gly residues.

It belongs to the nucleoredoxin family. In terms of assembly, interacts with isoform 1 of BSG.

The protein localises to the cell projection. It localises to the cilium. The protein resides in the photoreceptor outer segment. In terms of biological role, plays an important role in retinal cone photoreceptor survival. In association with glucose transporter SLC16A1/GLUT1 and BSG, promotes retinal cone survival by enhancing aerobic glycolysis and accelerating the entry of glucose into photoreceptors. May play a role in cone cell viability, slowing down cone degeneration, does not seem to play a role in degenerating rods. This Homo sapiens (Human) protein is Nucleoredoxin-like protein 1 (NXNL1).